We begin with the raw amino-acid sequence, 236 residues long: Proteasome subunit beta type-1 (236 aa).

Belongs to the peptidase T1B family. As to quaternary structure, the 26S proteasome consists of a 20S proteasome core and two 19S regulatory subunits. The 20S proteasome core is composed of 28 subunits that are arranged in four stacked rings, resulting in a barrel-shaped structure. The two end rings are each formed by seven alpha subunits, and the two central rings are each formed by seven beta subunits. The catalytic chamber with the active sites is on the inside of the barrel.

The protein localises to the cytoplasm. It localises to the nucleus. Its function is as follows. Non-catalytic component of the proteasome, a multicatalytic proteinase complex which is characterized by its ability to cleave peptides with Arg, Phe, Tyr, Leu, and Glu adjacent to the leaving group at neutral or slightly basic pH. The proteasome has an ATP-dependent proteolytic activity. The polypeptide is Proteasome subunit beta type-1 (psmB1) (Dictyostelium discoideum (Social amoeba)).